The following is a 223-amino-acid chain: Urease accessory protein UreF (223 aa).

This sequence belongs to the UreF family. In terms of assembly, ureD, UreF and UreG form a complex that acts as a GTP-hydrolysis-dependent molecular chaperone, activating the urease apoprotein by helping to assemble the nickel containing metallocenter of UreC. The UreE protein probably delivers the nickel.

It localises to the cytoplasm. Functionally, required for maturation of urease via the functional incorporation of the urease nickel metallocenter. This Rhizobium etli (strain ATCC 51251 / DSM 11541 / JCM 21823 / NBRC 15573 / CFN 42) protein is Urease accessory protein UreF.